A 983-amino-acid polypeptide reads, in one-letter code: Protein translocase subunit SecA (983 aa).

Residues Q83, 101-105 (GEGKT), and D489 each bind ATP. The disordered stretch occupies residues 948-983 (ISSEEEDNNEKTNINNNEDLERTKGEAQQTAKNPNE). Residues 973-983 (EAQQTAKNPNE) are compositionally biased toward polar residues.

Belongs to the SecA family. Monomer and homodimer. Part of the essential Sec protein translocation apparatus which comprises SecA, SecYEG and auxiliary proteins SecDF. Other proteins may also be involved.

It is found in the cell membrane. It localises to the cytoplasm. It carries out the reaction ATP + H2O + cellular proteinSide 1 = ADP + phosphate + cellular proteinSide 2.. Functionally, part of the Sec protein translocase complex. Interacts with the SecYEG preprotein conducting channel. Has a central role in coupling the hydrolysis of ATP to the transfer of proteins into and across the cell membrane, serving as an ATP-driven molecular motor driving the stepwise translocation of polypeptide chains across the membrane. The sequence is that of Protein translocase subunit SecA from Mesomycoplasma hyopneumoniae (strain J / ATCC 25934 / NCTC 10110) (Mycoplasma hyopneumoniae).